Consider the following 679-residue polypeptide: DNA ligase (679 aa).

NAD(+) contacts are provided by residues 41 to 45 (DSVYD), 90 to 91 (SL), and Glu120. Lys122 functions as the N6-AMP-lysine intermediate in the catalytic mechanism. Arg143, Glu177, Lys293, and Lys317 together coordinate NAD(+). Residues Cys411, Cys414, Cys429, and Cys434 each contribute to the Zn(2+) site. The region spanning 597–679 (DSNSWFAGKR…SETMREDAQA (83 aa)) is the BRCT domain.

The protein belongs to the NAD-dependent DNA ligase family. LigA subfamily. The cofactor is Mg(2+). Mn(2+) is required as a cofactor.

The enzyme catalyses NAD(+) + (deoxyribonucleotide)n-3'-hydroxyl + 5'-phospho-(deoxyribonucleotide)m = (deoxyribonucleotide)n+m + AMP + beta-nicotinamide D-nucleotide.. Functionally, DNA ligase that catalyzes the formation of phosphodiester linkages between 5'-phosphoryl and 3'-hydroxyl groups in double-stranded DNA using NAD as a coenzyme and as the energy source for the reaction. It is essential for DNA replication and repair of damaged DNA. The protein is DNA ligase of Lactiplantibacillus plantarum (strain ATCC BAA-793 / NCIMB 8826 / WCFS1) (Lactobacillus plantarum).